A 290-amino-acid polypeptide reads, in one-letter code: Ribosomal RNA small subunit methyltransferase A (290 aa).

Residues N28, L30, G55, E76, D102, and N126 each coordinate S-adenosyl-L-methionine.

The protein belongs to the class I-like SAM-binding methyltransferase superfamily. rRNA adenine N(6)-methyltransferase family. RsmA subfamily.

Its subcellular location is the cytoplasm. The enzyme catalyses adenosine(1518)/adenosine(1519) in 16S rRNA + 4 S-adenosyl-L-methionine = N(6)-dimethyladenosine(1518)/N(6)-dimethyladenosine(1519) in 16S rRNA + 4 S-adenosyl-L-homocysteine + 4 H(+). Specifically dimethylates two adjacent adenosines (A1518 and A1519) in the loop of a conserved hairpin near the 3'-end of 16S rRNA in the 30S particle. May play a critical role in biogenesis of 30S subunits. The sequence is that of Ribosomal RNA small subunit methyltransferase A from Lachnoclostridium phytofermentans (strain ATCC 700394 / DSM 18823 / ISDg) (Clostridium phytofermentans).